A 377-amino-acid chain; its full sequence is dTDP-fucopyranose mutase (377 aa).

Residues serine 12, 31–32, asparagine 39, 58–59, arginine 348, and 355–360 each bind FAD; these read DD, HI, and LDMDVC.

This sequence belongs to the UDP-galactopyranose/dTDP-fucopyranose mutase family. The cofactor is FAD.

It catalyses the reaction dTDP-alpha-D-fucose = dTDP-alpha-D-fucofuranose. It functions in the pathway bacterial outer membrane biogenesis; LPS O-antigen biosynthesis. Its activity is regulated as follows. Inhibited by Cu(2+), while other divalent cations such as Ca(2+), Co(2+), Fe(2+) and Mg(2+) have no obvious effects on enzyme activity. Its function is as follows. Catalyzes the conversion of dTDP-alpha-D-fucopyranose to dTDP-alpha-D-fucofuranose. This is a step in the biosynthesis of D-fucofuranose, a component of E.coli O52 O antigen. In Escherichia coli, this protein is dTDP-fucopyranose mutase (fcf2).